The following is a 261-amino-acid chain: Ribosome-inactivating protein PD-L1/PD-L2 (261 aa).

Asparagine 10 and asparagine 43 each carry an N-linked (GlcNAc...) asparagine; in PD-L1 and PD-L2 glycan. 2 cysteine pairs are disulfide-bonded: cysteine 34-cysteine 258 and cysteine 84-cysteine 105. The active site involves tyrosine 72. Valine 73 serves as a coordination point for substrate. Serine 120 contacts substrate. Active-site residues include tyrosine 122, glutamate 175, and arginine 178. Arginine 178 is a binding site for substrate. A glycan (N-linked (GlcNAc...) asparagine; in PD-L1) is linked at asparagine 255.

This sequence belongs to the ribosome-inactivating protein family. Type 1 RIP subfamily. In terms of processing, N-glycosylated. Loss of glycosylation does not affect DNA-cleaving ability. Loss of glycosylation does not affect protein synthesis inhibition, but increases adenine polynucleotide glycosidase activity likely as a consequence of the increased accessibility of substrates to the active site pocket in the absence of glycosylation. In terms of tissue distribution, expressed in leaves (at protein level).

It carries out the reaction Endohydrolysis of the N-glycosidic bond at one specific adenosine on the 28S rRNA.. In terms of biological role, inhibits protein synthesis. Has adenine polynucleotide glycosidase activity on herring sperm (hs)DNA and poly(A) substrates. Cleaves supercoiled pBR322 dsDNA. The sequence is that of Ribosome-inactivating protein PD-L1/PD-L2 from Phytolacca dioica (Bella sombra tree).